A 677-amino-acid chain; its full sequence is MMQESGTETKSNGSAIQNGSGGSNHLLECGGLREGRSNGETPAVDIGAADLAHAQQQQQQALQVARQLLLQQQQQQQVSGLKSPKRNDKQPALQVPVSVAMMTPQVITPQQMQQILQQQVLSPQQLQVLLQQQQALMLQQQQLQEFYKKQQEQLQLQLLQQQHAGKQPKEQQQVATQQLAFQQQLLQMQQLQQQHLLSLQRQGLLTIQPGQPALPLQPLAQGMIPTELQQLWKEVTSAHTAEETTGNNHSSLDLTTTCVSSSAPSKTSLIMNPHASTNGQLSVHTPKRESLSHEEHPHSHPLYGHGVCKWPGCEAVCEDFQSFLKHLNSEHALDDRSTAQCRVQMQVVQQLELQLAKDKERLQAMMTHLHVKSTEPKAAPQPLNLVSSVTLSKSASEASPQSLPHTPTTPTAPLTPVTQGPSVITTTSMHTVGPIRRRYSDKYNVPISSADIAQNQEFYKNAEVRPPFTYASLIRQAILESPEKQLTLNEIYNWFTRMFAYFRRNAATWKNAVRHNLSLHKCFVRVENVKGAVWTVDEVEFQKRRPQKISGNPSLIKNMQSSHAYCTPLNAALQASMAENSIPLYTTASMGNPTLGNLASAIREELNGAMEHTNSNESDSSPGRSPMQAVHPVHVKEEPLDPEEAEGPLSLVTTANHSPDFDHDRDYEDEPVNEDME.

The span at 1–18 (MMQESGTETKSNGSAIQN) shows a compositional bias: polar residues. Positions 1-43 (MMQESGTETKSNGSAIQNGSGGSNHLLECGGLREGRSNGETPA) are disordered. Ser-83 is subject to Phosphoserine. Positions 270–283 (IMNPHASTNGQLSV) are enriched in polar residues. The interval 270 to 298 (IMNPHASTNGQLSVHTPKRESLSHEEHPH) is disordered. Over residues 286-298 (PKRESLSHEEHPH) the composition is skewed to basic and acidic residues. A Glycyl lysine isopeptide (Lys-Gly) (interchain with G-Cter in SUMO2) cross-link involves residue Lys-287. The segment at 306–331 (GVCKWPGCEAVCEDFQSFLKHLNSEH) adopts a C2H2-type zinc-finger fold. Positions 348–369 (VQQLELQLAKDKERLQAMMTHL) are leucine-zipper. Glycyl lysine isopeptide (Lys-Gly) (interchain with G-Cter in SUMO2) cross-links involve residues Lys-372 and Lys-377. Positions 382-386 (PLNLV) are CTBP1-binding. The segment covering 390–403 (TLSKSASEASPQSL) has biased composition (polar residues). The segment at 390 to 422 (TLSKSASEASPQSLPHTPTTPTAPLTPVTQGPS) is disordered. Over residues 404 to 418 (PHTPTTPTAPLTPVT) the composition is skewed to low complexity. Lys-442 is covalently cross-linked (Glycyl lysine isopeptide (Lys-Gly) (interchain with G-Cter in SUMO2)). Positions 465 to 555 (RPPFTYASLI…PQKISGNPSL (91 aa)) form a DNA-binding region, fork-head. The interval 611-677 (EHTNSNESDS…EDEPVNEDME (67 aa)) is disordered. A compositionally biased stretch (polar residues) spans 612-623 (HTNSNESDSSPG). Thr-653 bears the Phosphothreonine mark. A Phosphoserine modification is found at Ser-658. The segment covering 667 to 677 (YEDEPVNEDME) has biased composition (acidic residues).

As to quaternary structure, forms homodimers and heterodimers with FOXP2 and FOXP4. Dimerization is required for DNA-binding. Self-associates. Interacts with CTBP1. Interacts with NCOR2 and AR. Interacts with FOXP2. Interacts with TBR1. Interacts with AURKA; this interaction facilitates the phosphorylation of FOXP1, which suppresses the expression of FBXL7. Interacts with ZMYM2. In terms of tissue distribution, isoform 8 is specifically expressed in embryonic stem cells.

The protein resides in the nucleus. In terms of biological role, transcriptional repressor. Can act with CTBP1 to synergistically repress transcription but CTPBP1 is not essential. Plays an important role in the specification and differentiation of lung epithelium. Acts cooperatively with FOXP4 to regulate lung secretory epithelial cell fate and regeneration by restricting the goblet cell lineage program; the function may involve regulation of AGR2. Essential transcriptional regulator of B-cell development. Involved in regulation of cardiac muscle cell proliferation. Involved in the columnar organization of spinal motor neurons. Promotes the formation of the lateral motor neuron column (LMC) and the preganglionic motor column (PGC) and is required for respective appropriate motor axon projections. The segment-appropriate generation of spinal cord motor columns requires cooperation with other Hox proteins. Can regulate PITX3 promoter activity; may promote midbrain identity in embryonic stem cell-derived dopamine neurons by regulating PITX3. Negatively regulates the differentiation of T follicular helper cells T(FH)s. Involved in maintenance of hair follicle stem cell quiescence; the function probably involves regulation of FGF18. Represses transcription of various pro-apoptotic genes and cooperates with NF-kappa B-signaling in promoting B-cell expansion by inhibition of caspase-dependent apoptosis. Binds to CSF1R promoter elements and is involved in regulation of monocyte differentiation and macrophage functions; repression of CSF1R in monocytes seems to involve NCOR2 as corepressor. Involved in endothelial cell proliferation, tube formation and migration indicative for a role in angiogenesis; the role in neovascularization seems to implicate suppression of SEMA5B. Can negatively regulate androgen receptor signaling. Acts as a transcriptional activator of the FBXL7 promoter; this activity is regulated by AURKA. Its function is as follows. Involved in transcriptional regulation in embryonic stem cells (ESCs). Stimulates expression of transcription factors that are required for pluripotency and decreases expression of differentiation-associated genes. Has distinct DNA-binding specifities as compared to the canonical form and preferentially binds DNA with the sequence 5'-CGATACAA-3' (or closely related sequences). Promotes ESC self-renewal and pluripotency. The sequence is that of Forkhead box protein P1 (FOXP1) from Homo sapiens (Human).